A 599-amino-acid polypeptide reads, in one-letter code: Nucleolar protein dnt1 (599 aa).

A Phosphoserine modification is found at Ser174. Disordered stretches follow at residues 210-262 (TQEE…PSRL) and 292-599 (DKSL…AALV). Residues 218–241 (QSFNSSLTPSQPTTYNRANFFSIN) show a composition bias toward polar residues. Low complexity predominate over residues 242 to 251 (DASSDSSSDA). Over residues 292–303 (DKSLRSSTREVS) the composition is skewed to basic and acidic residues. The residue at position 306 (Ser306) is a Phosphoserine. Residues 307 to 320 (PNEDSVNDDSSSDV) show a composition bias toward acidic residues. The span at 321–333 (SDEKETEAKHEIR) shows a compositional bias: basic and acidic residues. Over residues 344 to 354 (SHPSTAVPSEN) the composition is skewed to polar residues. The span at 364–380 (LSESSTTSISSSPSENS) shows a compositional bias: low complexity. Polar residues predominate over residues 390–401 (DSPNKSLVNDNV). A compositionally biased stretch (basic and acidic residues) spans 402-413 (SAKHDKESENGK). The segment covering 421–431 (QTLVTTSTISA) has biased composition (polar residues). Acidic residues predominate over residues 436–452 (PSDEIGSENDSDSDSDS). Positions 456-480 (VPLSQLQKKSQQRNSVSHEIQNRGT) are enriched in polar residues. A compositionally biased stretch (basic and acidic residues) spans 483-500 (SPKEPKAKPSTERPETHR). A compositionally biased stretch (polar residues) spans 501–514 (TLSYSRLSELSKTF). Thr513 bears the Phosphothreonine mark. Basic and acidic residues-rich tracts occupy residues 533 to 542 (ESKEEGRSDE) and 558 to 574 (NSEKEDRSNPIPVEKRA).

Phosphorylated by clp1.

It is found in the cytoplasm. The protein localises to the nucleus. Its subcellular location is the nucleolus. The protein resides in the cytoskeleton. It localises to the spindle. In terms of biological role, negatively regulates the septation initiation network (SIN) pathway, independently of the cdc14 phosphatase clp1. May also have a role in silencing rDNA transcription. Required for maintaining the exclusive nucleolus localization of nuc1. The sequence is that of Nucleolar protein dnt1 (dnt1) from Schizosaccharomyces pombe (strain 972 / ATCC 24843) (Fission yeast).